Reading from the N-terminus, the 62-residue chain is MAFGIRRAYPTPIVKPLWPYAVGGVITFFLFAKAANASMNTEEFINDPRNPRFKAGGVKEEH.

Residues 13 to 32 form a helical membrane-spanning segment; the sequence is IVKPLWPYAVGGVITFFLFA.

As to quaternary structure, F-type ATP synthases have 2 components, the catalytic core F(1) and the membrane-embedded component F(0), linked together by a central stalk and a peripheral stalk. The central stalk, also called rotor shaft, is often seen as part of F(1). The peripheral stalk is seen as part of F(0). F(0) contains the membrane channel next to the rotor. F-type ATP synthases form dimers but each monomer functions independently in ATP generation. The dimer consists of 17 different polypeptides: ATP1 (subunit alpha, 3 molecules per monomer, part of F(1)), ATP2 (subunit beta, 3 copies per monomer, part of F(1)), ATP3 (subunit gamma, part of the central stalk), ATP4 (subunit b, part of the peripheral stalk), ATP5/OSCP (subunit 5/OSCP, part of the peripheral stalk), ATP6 (subunit a, part of the peripheral stalk), ATP7 (subunit d, part of the peripheral stalk), ATP8 (subunit 8, part of the peripheral stalk), OLI1 (subunit c, part of the rotor, 10 molecules per monomer), ATP14 (subunit h, part of the peripheral stalk), ATP15 (subunit epsilon, part of the central stalk), ATP16 (subunit delta, part of the central stalk), ATP17 (subunit f, part of the peripheral stalk), ATP18 (subunit i/j, part of the peripheral stalk), ATP19 (subunit k, dimer-specific, at interface between monomers), ATP20 (subunit g, at interface between monomers), TIM11 (subunit e, at interface between monomers).

It localises to the mitochondrion inner membrane. Functionally, mitochondrial membrane ATP synthase (F(1)F(0) ATP synthase or Complex V) produces ATP from ADP in the presence of a proton gradient across the membrane which is generated by electron transport complexes of the respiratory chain. F-type ATP synthases consist of two structural domains, F(1) - containing the extramembraneous catalytic core, and F(0) - containing the membrane proton channel, linked together by a central stalk and a peripheral stalk. During catalysis, ATP synthesis in the catalytic domain of F(1) is coupled via a rotary mechanism of the central stalk subunits to proton translocation. Part of the complex F(0) domain. Minor subunit located with subunit a/ATP6 in the membrane. The sequence is that of ATP synthase subunit J, mitochondrial from Yarrowia lipolytica (strain CLIB 122 / E 150) (Yeast).